A 509-amino-acid chain; its full sequence is Maturase K (509 aa).

It belongs to the intron maturase 2 family. MatK subfamily.

The protein resides in the plastid. The protein localises to the chloroplast. Usually encoded in the trnK tRNA gene intron. Probably assists in splicing its own and other chloroplast group II introns. This Nicotiana glauca (Glaucous tobacco) protein is Maturase K.